The following is a 161-amino-acid chain: DNA-binding protein inhibitor ID-4 (161 aa).

The bHLH domain maps to 52–104 (AAEAAADEPALCLQCDMNDCYSRLRRLVPTIPPNKKVSKVEILPHVIDYILDL). Positions 116 to 161 (RQPPPPAPPHHPAGTCPAAPPRTPLTALNTDPAGAVNKQGDSILCR) are disordered. The span at 117–126 (QPPPPAPPHH) shows a compositional bias: pro residues.

In terms of assembly, heterodimer with other HLH proteins.

The protein localises to the nucleus. Its function is as follows. Transcriptional regulator (lacking a basic DNA binding domain) which negatively regulates the basic helix-loop-helix (bHLH) transcription factors by forming heterodimers and inhibiting their DNA binding and transcriptional activity. Implicated in regulating a variety of cellular processes, including cellular growth, senescence, differentiation, apoptosis, angiogenesis, and neoplastic transformation. This is DNA-binding protein inhibitor ID-4 (ID4) from Sus scrofa (Pig).